We begin with the raw amino-acid sequence, 289 residues long: Formamidopyrimidine-DNA glycosylase (289 aa).

P2 functions as the Schiff-base intermediate with DNA in the catalytic mechanism. The Proton donor role is filled by E3. The Proton donor; for beta-elimination activity role is filled by K61. Residues H96, R115, and K161 each contribute to the DNA site. An FPG-type zinc finger spans residues 247 to 281 (SAYGQEDRPCPRCGTAIRREKFMNRSSFSCPKCQR). Residue R271 is the Proton donor; for delta-elimination activity of the active site.

It belongs to the FPG family. As to quaternary structure, monomer. Zn(2+) is required as a cofactor.

It carries out the reaction Hydrolysis of DNA containing ring-opened 7-methylguanine residues, releasing 2,6-diamino-4-hydroxy-5-(N-methyl)formamidopyrimidine.. The enzyme catalyses 2'-deoxyribonucleotide-(2'-deoxyribose 5'-phosphate)-2'-deoxyribonucleotide-DNA = a 3'-end 2'-deoxyribonucleotide-(2,3-dehydro-2,3-deoxyribose 5'-phosphate)-DNA + a 5'-end 5'-phospho-2'-deoxyribonucleoside-DNA + H(+). Functionally, involved in base excision repair of DNA damaged by oxidation or by mutagenic agents. Acts as a DNA glycosylase that recognizes and removes damaged bases. Has a preference for oxidized purines, such as 7,8-dihydro-8-oxoguanine (8-oxoG). Has AP (apurinic/apyrimidinic) lyase activity and introduces nicks in the DNA strand. Cleaves the DNA backbone by beta-delta elimination to generate a single-strand break at the site of the removed base with both 3'- and 5'-phosphates. This is Formamidopyrimidine-DNA glycosylase from Rhodococcus opacus (strain B4).